We begin with the raw amino-acid sequence, 147 residues long: Bis(5'-nucleosyl)-tetraphosphatase [asymmetrical] (147 aa).

Ala-2 bears the N-acetylalanine mark. In terms of domain architecture, Nudix hydrolase spans 2-139 (ALRACGLIIF…EMKATLQEGH (138 aa)). The Nudix box motif lies at 43-64 (GHVDPGENDLETALRETREETG).

Belongs to the Nudix hydrolase family. The cofactor is a divalent metal cation.

The enzyme catalyses P(1),P(4)-bis(5'-guanosyl) tetraphosphate + H2O = GMP + GTP + 2 H(+). It catalyses the reaction a 5'-end CoA-ribonucleoside in mRNA + H2O = a 5'-end phospho-adenosine-phospho-ribonucleoside in mRNA + (R)-4'-phosphopantetheine + 2 H(+). The catalysed reaction is a 5'-end FAD-phospho-ribonucleoside in mRNA + H2O = a 5'-end phospho-adenosine-phospho-ribonucleoside in mRNA + FMN + 2 H(+). In terms of biological role, catalyzes the asymmetric hydrolysis of diadenosine 5',5'''-P1,P4-tetraphosphate (Ap4A) to yield AMP and ATP. Exhibits decapping activity towards FAD-capped RNAs and dpCoA-capped RNAs in vitro. This is Bis(5'-nucleosyl)-tetraphosphatase [asymmetrical] (Nudt2) from Mus musculus (Mouse).